Here is a 699-residue protein sequence, read N- to C-terminus: NAD(P)H-quinone oxidoreductase subunit 5, chloroplastic (699 aa).

The next 15 membrane-spanning stretches (helical) occupy residues 1-21 (WIIP…LLLF), 32-52 (WAFP…NLSI), 81-101 (IDPL…TVLI), 117-137 (FAYM…SNLI), 139-159 (IYIF…FWFT), 177-197 (GDFG…SFEF), 216-236 (LFVT…SAQF), 250-270 (TPIS…FLVA), 272-292 (LLPL…IGII), 319-339 (LGYM…FHLI), 346-366 (ALLF…VGYS), 388-408 (ISFL…CFWS), 417-437 (WLYS…TAFY), 539-559 (LFPL…GISF), and 598-618 (IFSV…YKPI).

Belongs to the complex I subunit 5 family. NDH is composed of at least 16 different subunits, 5 of which are encoded in the nucleus.

Its subcellular location is the plastid. The protein resides in the chloroplast thylakoid membrane. It carries out the reaction a plastoquinone + NADH + (n+1) H(+)(in) = a plastoquinol + NAD(+) + n H(+)(out). The enzyme catalyses a plastoquinone + NADPH + (n+1) H(+)(in) = a plastoquinol + NADP(+) + n H(+)(out). NDH shuttles electrons from NAD(P)H:plastoquinone, via FMN and iron-sulfur (Fe-S) centers, to quinones in the photosynthetic chain and possibly in a chloroplast respiratory chain. The immediate electron acceptor for the enzyme in this species is believed to be plastoquinone. Couples the redox reaction to proton translocation, and thus conserves the redox energy in a proton gradient. The sequence is that of NAD(P)H-quinone oxidoreductase subunit 5, chloroplastic (ndhF) from Digitalis grandiflora (Yellow foxglove).